Reading from the N-terminus, the 244-residue chain is Demethylmenaquinone methyltransferase (244 aa).

S-adenosyl-L-methionine contacts are provided by residues Thr65, Asp86, and 114–115 (DA).

Belongs to the class I-like SAM-binding methyltransferase superfamily. MenG/UbiE family.

The enzyme catalyses a 2-demethylmenaquinol + S-adenosyl-L-methionine = a menaquinol + S-adenosyl-L-homocysteine + H(+). It participates in quinol/quinone metabolism; menaquinone biosynthesis; menaquinol from 1,4-dihydroxy-2-naphthoate: step 2/2. Its function is as follows. Methyltransferase required for the conversion of demethylmenaquinol (DMKH2) to menaquinol (MKH2). The chain is Demethylmenaquinone methyltransferase from Lactobacillus johnsonii (strain CNCM I-12250 / La1 / NCC 533).